Here is a 199-residue protein sequence, read N- to C-terminus: Chaperone protein TorD (199 aa).

The protein belongs to the TorD/DmsD family. TorD subfamily.

It localises to the cytoplasm. Involved in the biogenesis of TorA. Acts on TorA before the insertion of the molybdenum cofactor and, as a result, probably favors a conformation of the apoenzyme that is competent for acquiring the cofactor. The chain is Chaperone protein TorD from Shigella boydii serotype 18 (strain CDC 3083-94 / BS512).